The chain runs to 425 residues: UPF0597 protein Moth_1414 (425 aa).

Belongs to the UPF0597 family.

This is UPF0597 protein Moth_1414 from Moorella thermoacetica (strain ATCC 39073 / JCM 9320).